The primary structure comprises 220 residues: Cell surface glycolipoprotein MPB83 (220 aa).

A signal peptide spans 1 to 24 (MINVQAKPAAAASLAAIAIAFLAG). Cysteine 25 carries the N-palmitoyl cysteine lipid modification. Cysteine 25 carries the S-diacylglycerol cysteine lipid modification. O-linked (Man...) threonine glycosylation is found at threonine 48 and threonine 49. The FAS1 domain maps to 83 to 215 (QDPVATAASN…ATVYMIDTVL (133 aa)).

As to quaternary structure, interacts with host (human) TLR2. In terms of processing, O-glycosylated. Contains 0-3 mannose residues attached to residues 48-49 in various configurations; the dominant glycoform is Thr-48(Man)/Thr-49(Man2) with an unusual Man(1-&gt;3)Man linkage, but Thr48(Man3)/Thr49(Man0) through to Thr48(Man0/)Thr49(Man3) are also seen. When isolated from culture filtrate runs as 25 and 23 kDa proteins; the larger protein is much less abundant, mostly associated with the cell and starts at residue 28, the shorter is more abundant and starts at residue 48.

The protein localises to the cell membrane. It is found in the secreted. Its subcellular location is the cell wall. Functionally, induces expression of human (host) matrix metalloproteinase-9 (MMP9) in a TLR1/TLR2-dependent fashion; the acylated 20 first mature residues (residues 25-40) induce the most expression, but whole recombinant protein (non-acylated and non-glycosylated), and mannosylated but not acylated protein (residues 26-220) also induce expression. The polypeptide is Cell surface glycolipoprotein MPB83 (mpb83) (Mycobacterium bovis (strain ATCC BAA-935 / AF2122/97)).